The following is a 175-amino-acid chain: Calcineurin subunit B (175 aa).

EF-hand domains follow at residues 21-56 (DEIE…SANP), 60-88 (RIME…FSGR), 90-125 (SKDE…MVGS), and 131-166 (QLQQ…TEVA). Ca(2+)-binding residues include D34, D36, S38, S40, E45, D66, D68, S70, D72, E77, D103, D105, D107, E114, D144, D146, D148, Q150, and E155.

It belongs to the calcineurin regulatory subunit family. Composed of a catalytic subunit (A) and a regulatory subunit (B).

Regulatory subunit of calcineurin, a calcium-dependent, calmodulin stimulated protein phosphatase. Confers calcium sensitivity. This Candida glabrata (strain ATCC 2001 / BCRC 20586 / JCM 3761 / NBRC 0622 / NRRL Y-65 / CBS 138) (Yeast) protein is Calcineurin subunit B (CNB1).